Consider the following 479-residue polypeptide: Dihydrolipoyl dehydrogenase, mitochondrial (479 aa).

The transit peptide at 1–19 directs the protein to the mitochondrion; that stretch reads FNRXSPGLQGVSSVPLRTY. The residue at position 50 (Lys-50) is an N6-acetyllysine; alternate. N6-succinyllysine; alternate is present on Lys-50. FAD contacts are provided by residues 55 to 64 and Lys-73; that span reads EKNETLGGTC. Cysteines 64 and 69 form a disulfide. Lys-88, Lys-106, Lys-116, and Lys-127 each carry N6-acetyllysine; alternate. An N6-succinyllysine; alternate mark is found at Lys-88, Lys-106, Lys-116, and Lys-127. Gly-138 is an FAD binding site. Residues Lys-143 and Lys-150 each carry the N6-succinyllysine modification. Position 167 to 169 (167 to 169) interacts with FAD; that stretch reads TGS. NAD(+) contacts are provided by residues 204 to 211 and Glu-227; that span reads GAGVIGVE. Residues Lys-257 and Lys-261 each carry the N6-succinyllysine modification. An NAD(+)-binding site is contributed by Val-262. Ser-269 is subject to Phosphoserine. Residue Gly-298 coordinates NAD(+). Lys-330 carries the N6-acetyllysine modification. FAD contacts are provided by residues Asp-339 and 345–348; that span reads MLAH. The residue at position 394 (Lys-394) is an N6-acetyllysine; alternate. Lys-394 is modified (N6-succinyllysine; alternate). N6-acetyllysine is present on residues Lys-401 and Lys-404. Residue Lys-414 is modified to N6-succinyllysine. His-471 serves as the catalytic Proton acceptor.

The protein belongs to the class-I pyridine nucleotide-disulfide oxidoreductase family. Homodimer. Part of the multimeric pyruvate dehydrogenase complex that contains multiple copies of pyruvate dehydrogenase (subunits PDHA (PDHA1 or PDHA2) and PDHB, E1), dihydrolipoamide acetyltransferase (DLAT, E2) and lipoamide dehydrogenase (DLD, E3). These subunits are bound to an inner core composed of about 48 DLAT and 12 PDHX molecules (by non covalent bonds). The 2-oxoglutarate dehydrogenase complex is composed of OGDH (2-oxoglutarate dehydrogenase; E1), DLST (dihydrolipoamide succinyltransferase; E2) and DLD (dihydrolipoamide dehydrogenase; E3). It contains multiple copies of the three enzymatic components (E1, E2 and E3). In the nucleus, the 2-oxoglutarate dehydrogenase complex associates with KAT2A. Interacts with PDHX. The cofactor is FAD. Tyrosine phosphorylated. As to expression, expressed in testis (at protein level).

It is found in the mitochondrion matrix. The protein resides in the nucleus. The protein localises to the cell projection. It localises to the cilium. Its subcellular location is the flagellum. It is found in the cytoplasmic vesicle. The protein resides in the secretory vesicle. The protein localises to the acrosome. It catalyses the reaction N(6)-[(R)-dihydrolipoyl]-L-lysyl-[protein] + NAD(+) = N(6)-[(R)-lipoyl]-L-lysyl-[protein] + NADH + H(+). Functionally, lipoamide dehydrogenase is a component of the glycine cleavage system as well as an E3 component of three alpha-ketoacid dehydrogenase complexes (pyruvate-, alpha-ketoglutarate-, and branched-chain amino acid-dehydrogenase complex). The 2-oxoglutarate dehydrogenase complex is mainly active in the mitochondrion. A fraction of the 2-oxoglutarate dehydrogenase complex also localizes in the nucleus and is required for lysine succinylation of histones: associates with KAT2A on chromatin and provides succinyl-CoA to histone succinyltransferase KAT2A. In monomeric form may have additional moonlighting function as serine protease. Involved in the hyperactivation of spermatazoa during capacitation and in the spermatazoal acrosome reaction. The chain is Dihydrolipoyl dehydrogenase, mitochondrial (DLD) from Mesocricetus auratus (Golden hamster).